Consider the following 89-residue polypeptide: Cytochrome b (89 aa).

A run of 2 helical transmembrane segments spans residues 38–58 (FGPLAGICLVIQIVTGVFLAM) and 82–89 (WLLRYMHA). Heme b is bound at residue histidine 88.

The protein belongs to the cytochrome b family. In terms of assembly, the main subunits of complex b-c1 are: cytochrome b, cytochrome c1 and the Rieske protein. Heme b is required as a cofactor.

The protein localises to the mitochondrion inner membrane. Component of the ubiquinol-cytochrome c reductase complex (complex III or cytochrome b-c1 complex) that is part of the mitochondrial respiratory chain. The b-c1 complex mediates electron transfer from ubiquinol to cytochrome c. Contributes to the generation of a proton gradient across the mitochondrial membrane that is then used for ATP synthesis. The protein is Cytochrome b (MT-CYB) of Brassica napus (Rape).